A 336-amino-acid polypeptide reads, in one-letter code: Protein DIA1 (336 aa).

The protein resides in the cytoplasm. Its function is as follows. Involved in regulation of invasive growth. The sequence is that of Protein DIA1 (DIA1) from Saccharomyces cerevisiae (strain ATCC 204508 / S288c) (Baker's yeast).